Reading from the N-terminus, the 259-residue chain is uncharacterized protein (259 aa).

The protein belongs to the BtpA family.

This is an uncharacterized protein from Pyrococcus abyssi (strain GE5 / Orsay).